A 90-amino-acid polypeptide reads, in one-letter code: Small ribosomal subunit protein bS18 (90 aa).

This sequence belongs to the bacterial ribosomal protein bS18 family. Part of the 30S ribosomal subunit. Forms a tight heterodimer with protein bS6.

Binds as a heterodimer with protein bS6 to the central domain of the 16S rRNA, where it helps stabilize the platform of the 30S subunit. The sequence is that of Small ribosomal subunit protein bS18 from Bordetella bronchiseptica (strain ATCC BAA-588 / NCTC 13252 / RB50) (Alcaligenes bronchisepticus).